A 1045-amino-acid chain; its full sequence is MDIS1-interacting receptor like kinase 2 (1045 aa).

A signal peptide spans 1–43; that stretch reads MNKTNPERKISLTSFKERMACKEKPRDLQVLLIISIVLSCSFA. Over 44 to 709 the chain is Extracellular; that stretch reads VSATVEEANA…SKKSHKDRNL (666 aa). N-linked (GlcNAc...) asparagine glycans are attached at residues asparagine 63, asparagine 77, asparagine 99, and asparagine 119. 24 LRR repeats span residues 92-116, 117-140, 141-165, 166-189, 191-212, 213-237, 238-260, 262-285, 286-309, 311-333, 334-356, 357-381, 383-405, 406-429, 431-452, 453-476, 477-501, 502-525, 527-549, 550-573, 575-597, 598-620, 621-644, and 646-670; these read LGSIIRLNLTNTGIEGTFEDFPFSS, LPNLTFVDLSMNRFSGTISPLWGR, FSKLEYFDLSINQLVGEIPPELGDL, SNLDTLHLVENKLNGSIPSEIGRL, KVTEIAIYDNLLTGPIPSSFGN, LTKLVNLYLFINSLSGSIPSEIGNL, PNLRELCLDRNNLTGKIPSSFGN, KNVTLLNMFENQLSGEIPPEIGNM, TALDTLSLHTNKLTGPIPSTLGNI, TLAVLHLYLNQLNGSIPPELGEM, ESMIDLEISENKLTGPVPDSFGK, LTALEWLFLRDNQLSGPIPPGIANS, ELTVLQLDTNNFTGFLPDTICRG, GKLENLTLDDNHFEGPVPKSLRDC, SLIRVRFKGNSFSGDISEAFGV, YPTLNFIDLSNNNFHGQLSANWEQ, SQKLVAFILSNNSITGAIPPEIWNM, TQLSQLDLSSNRITGELPESISNI, RISKLQLNGNRLSGKIPSGIRLL, TNLEYLDLSSNRFSSEIPPTLNNL, RLYYMNLSRNDLDQTIPEGLTKL, SQLQMLDLSYNQLDGEISSQFRS, LQNLERLDLSHNNLSGQIPPSFKD, and LALTHVDVSHNNLQGPIPDNAAFRN. N-linked (GlcNAc...) asparagine glycans are attached at residues asparagine 179 and asparagine 212. N-linked (GlcNAc...) asparagine glycosylation is found at asparagine 249, asparagine 263, and asparagine 284. An N-linked (GlcNAc...) asparagine glycan is attached at asparagine 323. Asparagine 380, asparagine 393, and asparagine 410 each carry an N-linked (GlcNAc...) asparagine glycan. N-linked (GlcNAc...) asparagine glycans are attached at residues asparagine 487 and asparagine 500. Residue asparagine 580 is glycosylated (N-linked (GlcNAc...) asparagine). Asparagine 633 is a glycosylation site (N-linked (GlcNAc...) asparagine). A glycan (N-linked (GlcNAc...) asparagine) is linked at asparagine 687. The helical transmembrane segment at 710–730 threads the bilayer; it reads IIYILVPIIGAIIILSVCAGI. Residues 731 to 1045 are Cytoplasmic-facing; the sequence is FICFRKRTKQ…TMLSISTAFS (315 aa). Residue threonine 772 is modified to Phosphothreonine. The Protein kinase domain occupies 775–1045; that stretch reads FDPKYLIGTG…TMLSISTAFS (271 aa). Residues 781–789 and lysine 802 contribute to the ATP site; that span reads IGTGGHGKV. Phosphotyrosine occurs at positions 853 and 892. Aspartate 905 functions as the Proton acceptor in the catalytic mechanism. Serine 938 is subject to Phosphoserine. A phosphotyrosine mark is found at tyrosine 946 and tyrosine 953.

Belongs to the protein kinase superfamily. Ser/Thr protein kinase family. Interacts with MDIS1 and LURE1.2. Binds to SCOOP12; this interaction triggers the formation of complex between MIK2 and the BAK1/SERK3 and SERK4 coreceptors. Expressed in pollen tubes. Highly expressed in shoots, roots and leaves.

The protein resides in the cell membrane. It catalyses the reaction L-seryl-[protein] + ATP = O-phospho-L-seryl-[protein] + ADP + H(+). The enzyme catalyses L-threonyl-[protein] + ATP = O-phospho-L-threonyl-[protein] + ADP + H(+). Acts as a receptor of SCOOP peptides from Brassicaceae plants regulating multiple processing including plant growth, development and stress responses. Perception of SCOOP peptides induces the association of MIK2 with the coreceptors BAK1/SERK3 and SERK4 and relays the signaling through the activation of receptor-like cytosolic kinases (RLCKs) BIK1 and PBL1. Also able to detect SCOOP-like proteins (SCOOPL) present in fungal Fusarium spp. and bacterial Comamonadaceae to elicit various immune responses, including growth inhibition, ROS production, calcium Ca(2+) influx, MAPK activation and MYB51 promoter activation in roots, thus being required for resistance to several root pathogens. Involved in the pollen tube perception of the female signal. Required to trigger defense responses toward generalist herbivores such as Spodoptera littoralis, probably via the activation of jasmonate and indole glucosinolate biosynthesis. The protein is MDIS1-interacting receptor like kinase 2 of Arabidopsis thaliana (Mouse-ear cress).